A 354-amino-acid chain; its full sequence is Uroporphyrinogen decarboxylase (354 aa).

Residues 35 to 39 (RQAGR), aspartate 84, tyrosine 159, serine 214, and histidine 333 each bind substrate.

This sequence belongs to the uroporphyrinogen decarboxylase family. As to quaternary structure, homodimer.

It localises to the cytoplasm. The catalysed reaction is uroporphyrinogen III + 4 H(+) = coproporphyrinogen III + 4 CO2. The protein operates within porphyrin-containing compound metabolism; protoporphyrin-IX biosynthesis; coproporphyrinogen-III from 5-aminolevulinate: step 4/4. Its function is as follows. Catalyzes the decarboxylation of four acetate groups of uroporphyrinogen-III to yield coproporphyrinogen-III. This Nocardia farcinica (strain IFM 10152) protein is Uroporphyrinogen decarboxylase.